A 330-amino-acid polypeptide reads, in one-letter code: Solute-binding protein NAS141_03721 (330 aa).

A signal peptide spans 1-27 (MSFFTKTAQLVSGAAVAATLFTATAQA). Alpha-D-mannuronate is bound by residues Glu-75, Asn-97, Arg-153, Arg-173, Tyr-196, 213–214 (NE), and Arg-240. Alpha-D-taluronate is bound by residues Glu-75, Asn-97, Arg-153, Arg-173, Tyr-196, 213–214 (NE), and Arg-240.

This sequence belongs to the bacterial solute-binding protein 7 family. As to quaternary structure, the complex is comprised of an extracytoplasmic solute-binding protein and a heteromeric permease formed by two transmembrane proteins.

It localises to the periplasm. Functionally, solute-binding protein that binds D-mannuronate and D-taluronate (in vitro). Probably part of a tripartite ATP-independent periplasmic (TRAP) transport system that mediates solute transport into the cytoplasm. The chain is Solute-binding protein NAS141_03721 from Sulfitobacter sp. (strain NAS-14.1).